Here is a 338-residue protein sequence, read N- to C-terminus: Glycerol-3-phosphate dehydrogenase [NAD(P)+] (338 aa).

3 residues coordinate NADPH: serine 13, tryptophan 14, and lysine 108. 3 residues coordinate sn-glycerol 3-phosphate: lysine 108, glycine 139, and serine 141. Alanine 143 is an NADPH binding site. 5 residues coordinate sn-glycerol 3-phosphate: lysine 194, aspartate 247, serine 257, arginine 258, and asparagine 259. Lysine 194 acts as the Proton acceptor in catalysis. Residue arginine 258 coordinates NADPH. Residues valine 282 and glutamate 284 each contribute to the NADPH site.

Its subcellular location is the cytoplasm. The enzyme catalyses sn-glycerol 3-phosphate + NAD(+) = dihydroxyacetone phosphate + NADH + H(+). It catalyses the reaction sn-glycerol 3-phosphate + NADP(+) = dihydroxyacetone phosphate + NADPH + H(+). It participates in membrane lipid metabolism; glycerophospholipid metabolism. Catalyzes the reduction of the glycolytic intermediate dihydroxyacetone phosphate (DHAP) to sn-glycerol 3-phosphate (G3P), the key precursor for phospholipid synthesis. This is Glycerol-3-phosphate dehydrogenase [NAD(P)+] from Streptococcus pyogenes serotype M6 (strain ATCC BAA-946 / MGAS10394).